Consider the following 136-residue polypeptide: ATP synthase F(0) complex subunit C1, mitochondrial (136 aa).

A mitochondrion-targeting transit peptide spans 1–61 (MQTTGALLIS…REFQTSVVSR (61 aa)). The chain crosses the membrane as a helical span at residues 77–97 (VGVAGSGAGIGTVFGSLIIGY). The residue at position 104 (Lys-104) is an N6,N6,N6-trimethyllysine. A helical membrane pass occupies residues 112-132 (ILGFALSEAMGLFCLMVAFLI).

The protein belongs to the ATPase C chain family. Homooctamer; the c-ring consists of eight c subunits forming a circle, and each subunit adopts a hairpin shape. Component of the ATP synthase complex composed at least of ATP5F1A/subunit alpha, ATP5F1B/subunit beta, ATP5MC1/subunit c (homooctomer), MT-ATP6/subunit a, MT-ATP8/subunit 8, ATP5ME/subunit e, ATP5MF/subunit f, ATP5MG/subunit g, ATP5MK/subunit k, ATP5MJ/subunit j, ATP5F1C/subunit gamma, ATP5F1D/subunit delta, ATP5F1E/subunit epsilon, ATP5PF/subunit F6, ATP5PB/subunit b, ATP5PD/subunit d, ATP5PO/subunit OSCP. ATP synthase complex consists of a soluble F(1) head domain (subunits alpha(3) and beta(3)) - the catalytic core - and a membrane F(0) domain - the membrane proton channel (subunits c, a, 8, e, f, g, k and j). These two domains are linked by a central stalk (subunits gamma, delta, and epsilon) rotating inside the F1 region and a stationary peripheral stalk (subunits F6, b, d, and OSCP). Interacts with TMEM70 (homooligomer form); this interaction facilitates the oligomer formation of subunit c/ATP5MC1 (c-ring) and the c-ring membrane insertion and also protects ATP5MC1 against intramitochondrial proteolysis. Trimethylated by ATPSCKMT at Lys-104. Methylation is required for proper incorporation of the C subunit into the ATP synthase complex and mitochondrial respiration.

The protein localises to the mitochondrion membrane. The catalysed reaction is H(+)(in) = H(+)(out). Subunit c, of the mitochondrial membrane ATP synthase complex (F(1)F(0) ATP synthase or Complex V) that produces ATP from ADP in the presence of a proton gradient across the membrane which is generated by electron transport complexes of the respiratory chain. ATP synthase complex consist of a soluble F(1) head domain - the catalytic core - and a membrane F(1) domain - the membrane proton channel. These two domains are linked by a central stalk rotating inside the F(1) region and a stationary peripheral stalk. During catalysis, ATP synthesis in the catalytic domain of F(1) is coupled via a rotary mechanism of the central stalk subunits to proton translocation. With the subunit a (MT-ATP6), forms the proton-conducting channel in the F(0) domain, that contains two crucial half-channels (inlet and outlet) that facilitate proton movement from the mitochondrial intermembrane space (IMS) into the matrix. Protons are taken up via the inlet half-channel and released through the outlet half-channel, following a Grotthuss mechanism. This is ATP synthase F(0) complex subunit C1, mitochondrial from Bos taurus (Bovine).